Consider the following 175-residue polypeptide: Protein GrpE (175 aa).

Residues 1–35 (MSEQKQEIENENAQNSENLQDDLQDNEKNETNELQ) are disordered. Residues 25–35 (DNEKNETNELQ) are compositionally biased toward basic and acidic residues.

It belongs to the GrpE family. Homodimer.

It localises to the cytoplasm. Participates actively in the response to hyperosmotic and heat shock by preventing the aggregation of stress-denatured proteins, in association with DnaK and GrpE. It is the nucleotide exchange factor for DnaK and may function as a thermosensor. Unfolded proteins bind initially to DnaJ; upon interaction with the DnaJ-bound protein, DnaK hydrolyzes its bound ATP, resulting in the formation of a stable complex. GrpE releases ADP from DnaK; ATP binding to DnaK triggers the release of the substrate protein, thus completing the reaction cycle. Several rounds of ATP-dependent interactions between DnaJ, DnaK and GrpE are required for fully efficient folding. This Campylobacter jejuni (strain RM1221) protein is Protein GrpE.